Here is a 331-residue protein sequence, read N- to C-terminus: 6-phosphogluconolactonase (331 aa).

K287 is modified (N6-acetyllysine).

This sequence belongs to the cycloisomerase 2 family.

The enzyme catalyses 6-phospho-D-glucono-1,5-lactone + H2O = 6-phospho-D-gluconate + H(+). The protein operates within carbohydrate degradation; pentose phosphate pathway; D-ribulose 5-phosphate from D-glucose 6-phosphate (oxidative stage): step 2/3. Its function is as follows. Catalyzes the hydrolysis of 6-phosphogluconolactone to 6-phosphogluconate. This is 6-phosphogluconolactonase from Escherichia coli O7:K1 (strain IAI39 / ExPEC).